The chain runs to 418 residues: Pyrophosphate--fructose 6-phosphate 1-phosphotransferase (418 aa).

G13 contacts diphosphate. N111 is a binding site for Mg(2+). Substrate contacts are provided by residues T139–D141, M187–R189, E244, and Y295–R298. The active-site Proton acceptor is D141.

This sequence belongs to the phosphofructokinase type A (PFKA) family. PPi-dependent PFK group II subfamily. Clade 'B2' sub-subfamily. In terms of assembly, homodimer. It depends on Mg(2+) as a cofactor.

The protein resides in the cytoplasm. The catalysed reaction is beta-D-fructose 6-phosphate + diphosphate = beta-D-fructose 1,6-bisphosphate + phosphate + H(+). Its pathway is carbohydrate degradation; glycolysis; D-glyceraldehyde 3-phosphate and glycerone phosphate from D-glucose: step 3/4. Non-allosteric. Catalyzes the phosphorylation of D-fructose 6-phosphate, the first committing step of glycolysis. Uses inorganic phosphate (PPi) as phosphoryl donor instead of ATP like common ATP-dependent phosphofructokinases (ATP-PFKs), which renders the reaction reversible, and can thus function both in glycolysis and gluconeogenesis. Consistently, PPi-PFK can replace the enzymes of both the forward (ATP-PFK) and reverse (fructose-bisphosphatase (FBPase)) reactions. The chain is Pyrophosphate--fructose 6-phosphate 1-phosphotransferase from Xanthomonas campestris pv. campestris (strain B100).